We begin with the raw amino-acid sequence, 1087 residues long: Error-prone DNA polymerase 2 (1087 aa).

Positions 1033–1064 are disordered; that stretch reads DGAFRPPTGRGDEFAHGSPGSADSRGKAPPGV.

Belongs to the DNA polymerase type-C family. DnaE2 subfamily.

The protein localises to the cytoplasm. The enzyme catalyses DNA(n) + a 2'-deoxyribonucleoside 5'-triphosphate = DNA(n+1) + diphosphate. Functionally, DNA polymerase involved in damage-induced mutagenesis and translesion synthesis (TLS). It is not the major replicative DNA polymerase. This is Error-prone DNA polymerase 2 from Rhizobium meliloti (strain 1021) (Ensifer meliloti).